The following is a 341-amino-acid chain: Ribosomal RNA small subunit methyltransferase H (341 aa).

S-adenosyl-L-methionine contacts are provided by residues glycine 47–tyrosine 49, aspartate 64, phenylalanine 91, aspartate 109, and glutamine 116.

Belongs to the methyltransferase superfamily. RsmH family.

Its subcellular location is the cytoplasm. The catalysed reaction is cytidine(1402) in 16S rRNA + S-adenosyl-L-methionine = N(4)-methylcytidine(1402) in 16S rRNA + S-adenosyl-L-homocysteine + H(+). Its function is as follows. Specifically methylates the N4 position of cytidine in position 1402 (C1402) of 16S rRNA. The sequence is that of Ribosomal RNA small subunit methyltransferase H from Rhizobium rhizogenes (strain K84 / ATCC BAA-868) (Agrobacterium radiobacter).